The sequence spans 35 residues: Peptide ToHyp2 (35 aa).

Over residues 1–29 (LPKPPLLPPPVPGLAPGLPPLPVPDPVPH) the composition is skewed to pro residues. The segment at 1 to 35 (LPKPPLLPPPVPGLAPGLPPLPVPDPVPHPPKKPP) is disordered. Hydroxyproline is present on residues P5, P9, P10, P12, P16, P20, P31, and P35.

In terms of processing, O-glycosylated; contains pentose side chains at some or all of the hydroxyproline residues. Glycosylation is required for full antifungal activity.

In terms of biological role, antimicrobial peptide. Inhibits elongation of hyphae in B.sorokiniana (IC(50)=3.8 uM) but has no effect on this process or on germination of conidia in a panel of other phytopathogenic fungi. At concentrations above 10 uM, has antibacterial activity. This Taraxacum officinale (Common dandelion) protein is Peptide ToHyp2.